The sequence spans 349 residues: Histidinol-phosphate aminotransferase (349 aa).

N6-(pyridoxal phosphate)lysine is present on lysine 206.

Belongs to the class-II pyridoxal-phosphate-dependent aminotransferase family. Histidinol-phosphate aminotransferase subfamily. Homodimer. The cofactor is pyridoxal 5'-phosphate.

The enzyme catalyses L-histidinol phosphate + 2-oxoglutarate = 3-(imidazol-4-yl)-2-oxopropyl phosphate + L-glutamate. The protein operates within amino-acid biosynthesis; L-histidine biosynthesis; L-histidine from 5-phospho-alpha-D-ribose 1-diphosphate: step 7/9. The polypeptide is Histidinol-phosphate aminotransferase (Streptococcus mutans serotype c (strain ATCC 700610 / UA159)).